A 598-amino-acid polypeptide reads, in one-letter code: Dihydroxy-acid dehydratase, mitochondrial (598 aa).

Residues 1 to 18 constitute a mitochondrion transit peptide; it reads MMFCKLLRCQNGIASKRA. Position 84 (cysteine 84) interacts with [2Fe-2S] cluster. Aspartate 116 is a Mg(2+) binding site. Cysteine 157 is a [2Fe-2S] cluster binding site. Aspartate 158 contributes to the Mg(2+) binding site. A [2Fe-2S] cluster-binding site is contributed by cysteine 232. Glutamate 485 contributes to the Mg(2+) binding site. Catalysis depends on serine 511, which acts as the Proton acceptor.

It belongs to the IlvD/Edd family. Requires [2Fe-2S] cluster as cofactor. The cofactor is Mg(2+).

Its subcellular location is the mitochondrion. It catalyses the reaction (2R)-2,3-dihydroxy-3-methylbutanoate = 3-methyl-2-oxobutanoate + H2O. It carries out the reaction (2R,3R)-2,3-dihydroxy-3-methylpentanoate = (S)-3-methyl-2-oxopentanoate + H2O. It participates in amino-acid biosynthesis; L-isoleucine biosynthesis; L-isoleucine from 2-oxobutanoate: step 3/4. The protein operates within amino-acid biosynthesis; L-valine biosynthesis; L-valine from pyruvate: step 3/4. Functionally, dihydroxyacid dehydratase that catalyzes the third step in the common pathway leading to biosynthesis of branched-chain amino acids. Catalyzes the dehydration of (2R,3R)-2,3-dihydroxy-3-methylpentanoate (2,3-dihydroxy-3-methylvalerate) into 2-oxo-3-methylpentanoate (2-oxo-3-methylvalerate) and of (2R)-2,3-dihydroxy-3-methylbutanoate (2,3-dihydroxyisovalerate) into 2-oxo-3-methylbutanoate (2-oxoisovalerate), the penultimate precursor to L-isoleucine and L-valine, respectively. In Schizosaccharomyces pombe (strain 972 / ATCC 24843) (Fission yeast), this protein is Dihydroxy-acid dehydratase, mitochondrial.